Here is a 133-residue protein sequence, read N- to C-terminus: MPKRTRFRKQHRGRMKGISYRGNHICFGRYALQALEPAWITSRQIEAGRRAMTRYARRGGKIWVRIFPDKPVTVRPTETRMGSGKGSPEYWVSVVKPGRILYEMGGVSETVARAAIKIAACKMPIRTQFIISG.

The protein belongs to the universal ribosomal protein uL16 family. As to quaternary structure, part of the 50S ribosomal subunit.

The protein localises to the plastid. It localises to the chloroplast. The polypeptide is Large ribosomal subunit protein uL16c (Liriodendron tulipifera (Tuliptree)).